A 772-amino-acid polypeptide reads, in one-letter code: Probable serine/threonine-protein kinase HAL5-like (772 aa).

Disordered regions lie at residues 1-102, 115-165, 185-241, and 344-396; these read MASS…TRHV, RAGT…EPNN, IDTQ…RSNT, and NADE…SANV. Positions 9 to 19 are enriched in basic and acidic residues; that stretch reads SEPRISRESSL. 2 stretches are compositionally biased toward low complexity: residues 20–33 and 41–59; these read KRSLSISKSLKGLF and NTGPTTAAAAAAPSSISTP. Basic and acidic residues predominate over residues 66–86; sequence TKDKQDRLKNLAANKEKELQT. The segment covering 146-158 has biased composition (low complexity); sequence RQSSSNRSSSFSN. The segment covering 202–212 has biased composition (basic residues); it reads RRSRSTQRKRL. The region spanning 454 to 758 is the Protein kinase domain; that stretch reads GKSIGIIGQG…VDSLLKSSWM (305 aa). ATP is bound by residues 460–468 and Lys498; that span reads IGQGAYGVV. Catalysis depends on Asp609, which acts as the Proton acceptor.

Belongs to the protein kinase superfamily. CAMK Ser/Thr protein kinase family. NPR/HAL subfamily. HAL5 sub-subfamily.

It catalyses the reaction L-seryl-[protein] + ATP = O-phospho-L-seryl-[protein] + ADP + H(+). It carries out the reaction L-threonyl-[protein] + ATP = O-phospho-L-threonyl-[protein] + ADP + H(+). The protein is Probable serine/threonine-protein kinase HAL5-like of Kluyveromyces lactis (strain ATCC 8585 / CBS 2359 / DSM 70799 / NBRC 1267 / NRRL Y-1140 / WM37) (Yeast).